We begin with the raw amino-acid sequence, 688 residues long: Lap-Emerin-Man domain protein 2 (688 aa).

Disordered regions lie at residues 62 to 113 (LQKE…IDKP) and 202 to 227 (PQLR…HKRP). Positions 82 to 92 (PKYLYPSSPSK) are enriched in low complexity. A compositionally biased stretch (polar residues) spans 212 to 222 (RLQTSATSSPL). A run of 2 helical transmembrane segments spans residues 318–338 (YLVH…LALL) and 547–567 (KVFL…INFF). Thr683 is modified (phosphothreonine). Ser684 carries the post-translational modification Phosphoserine.

Its subcellular location is the nucleus inner membrane. Functionally, nucleus inner membrane protein involved in meiosis. Plays a role in regulating nuclear envelope (NE) morphology and nuclear integrity, particularly during spindle pole body (SPB) extrusion or insertion through the NE, and perhaps during karyokinesis. This chain is Lap-Emerin-Man domain protein 2 (lem2), found in Schizosaccharomyces pombe (strain 972 / ATCC 24843) (Fission yeast).